The primary structure comprises 110 residues: Large ribosomal subunit protein uL22 (110 aa).

The protein belongs to the universal ribosomal protein uL22 family. As to quaternary structure, part of the 50S ribosomal subunit.

Its function is as follows. This protein binds specifically to 23S rRNA; its binding is stimulated by other ribosomal proteins, e.g. L4, L17, and L20. It is important during the early stages of 50S assembly. It makes multiple contacts with different domains of the 23S rRNA in the assembled 50S subunit and ribosome. In terms of biological role, the globular domain of the protein is located near the polypeptide exit tunnel on the outside of the subunit, while an extended beta-hairpin is found that lines the wall of the exit tunnel in the center of the 70S ribosome. This is Large ribosomal subunit protein uL22 from Colwellia psychrerythraea (strain 34H / ATCC BAA-681) (Vibrio psychroerythus).